We begin with the raw amino-acid sequence, 134 residues long: UPF0357 protein YCL012C (134 aa).

The signal sequence occupies residues 1 to 23 (MKSLFYLKLLLWVVLLSLCLLMA). Residues S71 and S74 each carry the phosphoserine modification. K86 participates in a covalent cross-link: Glycyl lysine isopeptide (Lys-Gly) (interchain with G-Cter in ubiquitin).

It belongs to the UPF0357 family.

This chain is UPF0357 protein YCL012C, found in Saccharomyces cerevisiae (strain ATCC 204508 / S288c) (Baker's yeast).